Consider the following 319-residue polypeptide: Structure-specific endonuclease subunit SLX1 (319 aa).

One can recognise a GIY-YIG domain in the interval 20-103 (TFYCCYLLQS…QHGYKTHYIP (84 aa)). The segment at 233 to 297 (CNLCGQCYDY…LPNFCMCPGC (65 aa)) adopts an SLX1-type zinc-finger fold.

The protein belongs to the SLX1 family. In terms of assembly, forms a heterodimer with SLX4. A divalent metal cation serves as cofactor.

Its subcellular location is the nucleus. In terms of biological role, catalytic subunit of the SLX1-SLX4 structure-specific endonuclease that resolves DNA secondary structures generated during DNA repair and recombination. Has endonuclease activity towards branched DNA substrates, introducing single-strand cuts in duplex DNA close to junctions with ss-DNA. This is Structure-specific endonuclease subunit SLX1 from Vanderwaltozyma polyspora (strain ATCC 22028 / DSM 70294 / BCRC 21397 / CBS 2163 / NBRC 10782 / NRRL Y-8283 / UCD 57-17) (Kluyveromyces polysporus).